We begin with the raw amino-acid sequence, 338 residues long: Uroporphyrinogen decarboxylase (338 aa).

Substrate contacts are provided by residues 27-31, D77, Y151, S203, and H317; that span reads RQAGR.

Belongs to the uroporphyrinogen decarboxylase family. Homodimer.

The protein localises to the cytoplasm. The enzyme catalyses uroporphyrinogen III + 4 H(+) = coproporphyrinogen III + 4 CO2. Its pathway is porphyrin-containing compound metabolism; protoporphyrin-IX biosynthesis; coproporphyrinogen-III from 5-aminolevulinate: step 4/4. Catalyzes the decarboxylation of four acetate groups of uroporphyrinogen-III to yield coproporphyrinogen-III. The chain is Uroporphyrinogen decarboxylase from Wolbachia sp. subsp. Drosophila simulans (strain wRi).